A 1132-amino-acid polypeptide reads, in one-letter code: Mediator of RNA polymerase II transcription subunit 5 (1132 aa).

A compositionally biased stretch (basic and acidic residues) spans 998–1023 (KGDVDIKGEDLHEKNDSAEVRQETQP). The disordered stretch occupies residues 998–1070 (KGDVDIKGED…RTNNVPMIKA (73 aa)). Positions 1047–1057 (YEEEEENEDND) are enriched in acidic residues.

It belongs to the Mediator complex subunit 5 family. As to quaternary structure, component of the Mediator complex, which is composed of at least 21 subunits that form three structurally distinct submodules. The Mediator head module contains MED6, MED8, MED11, SRB4/MED17, SRB5/MED18, ROX3/MED19, SRB2/MED20 and SRB6/MED22, the middle module contains MED1, MED4, NUT1/MED5, MED7, CSE2/MED9, NUT2/MED10, SRB7/MED21 and SOH1/MED31, and the tail module contains MED2, PGD1/MED3, RGR1/MED14, GAL11/MED15 and SIN4/MED16. The head and the middle modules interact directly with RNA polymerase II, whereas the elongated tail module interacts with gene-specific regulatory proteins.

It localises to the nucleus. Component of the Mediator complex, a coactivator involved in the regulated transcription of nearly all RNA polymerase II-dependent genes. Mediator functions as a bridge to convey information from gene-specific regulatory proteins to the basal RNA polymerase II transcription machinery. The Mediator complex, having a compact conformation in its free form, is recruited to promoters by direct interactions with regulatory proteins and serves for the assembly of a functional preinitiation complex with RNA polymerase II and the general transcription factors. The Mediator complex unfolds to an extended conformation and partially surrounds RNA polymerase II, specifically interacting with the unphosphorylated form of the C-terminal domain (CTD) of RNA polymerase II. The Mediator complex dissociates from the RNA polymerase II holoenzyme and stays at the promoter when transcriptional elongation begins. This is Mediator of RNA polymerase II transcription subunit 5 (NUT1) from Saccharomyces cerevisiae (strain ATCC 204508 / S288c) (Baker's yeast).